Consider the following 383-residue polypeptide: D-aspartate oxidase 3 (383 aa).

A signal peptide spans 1–17; that stretch reads MLYALLLLFGGVSTVSS. Lysine 56 and serine 63 together coordinate FAD. N-linked (GlcNAc...) asparagine glycans are attached at residues asparagine 152, asparagine 271, and asparagine 320. Threonine 339 is a binding site for FAD. Asparagine 371 carries an N-linked (GlcNAc...) asparagine glycan.

It belongs to the DAMOX/DASOX family. FAD is required as a cofactor. In terms of tissue distribution, in both sexes, present in coelomocytes (at protein level). Expressed in hypodermal cells and the proximal gonadal sheath cells in adult hermaphrodites (at protein level). Also expressed in probable head mesodermal cells and unidentified cells in the head, and vulval muscles in adult hermaphrodites. Expressed in the seminal vesicle, spicule and tail cells in adult males (at protein level).

It is found in the secreted. The enzyme catalyses D-aspartate + O2 + H2O = oxaloacetate + H2O2 + NH4(+). It carries out the reaction D-glutamate + O2 + H2O = H2O2 + 2-oxoglutarate + NH4(+). In terms of biological role, selectively catalyzes the oxidative deamination of acidic amino acids. Plays a role in the egg-laying events and maturation processes of the reproductive organs. This is D-aspartate oxidase 3 (ddo-3) from Caenorhabditis elegans.